The following is a 512-amino-acid chain: Beta-glucosidase 44 (512 aa).

The signal sequence occupies residues 1-23 (MRHLSSPPWPLLLLLLLSSFTSG). Residue Gln58 participates in a beta-D-glucoside binding. The N-linked (GlcNAc...) asparagine glycan is linked to Asn86. Residues His159 and 204–205 (NE) contribute to the a beta-D-glucoside site. The Proton donor role is filled by Glu205. Cys224 and Cys231 are disulfide-bonded. Asn230 carries an N-linked (GlcNAc...) asparagine glycan. The a beta-D-glucoside site is built by Tyr347 and Glu419. The Nucleophile role is filled by Glu419. Residue Asn427 is glycosylated (N-linked (GlcNAc...) asparagine). A beta-D-glucoside contacts are provided by residues Trp466, 473–474 (EW), and Phe482.

This sequence belongs to the glycosyl hydrolase 1 family. In terms of assembly, homodimer.

Its subcellular location is the secreted. It catalyses the reaction Hydrolysis of terminal, non-reducing beta-D-glucosyl residues with release of beta-D-glucose.. In terms of biological role, hydrolyzes p-nitrophenyl beta-D-glucoside, p-nitrophenyl beta-D-mannoside, cellobiose, 4-methylumbelliferyl-beta-D-glucoside, laminarin, amygdalin, esculin and gentiobiose. This Arabidopsis thaliana (Mouse-ear cress) protein is Beta-glucosidase 44.